Reading from the N-terminus, the 212-residue chain is Ras-related protein Rab-43 (212 aa).

GTP is bound at residue 25–32 (GDASVGKT). The Effector region signature appears at 47-55 (QGSTIGVDF). Ser49 carries the post-translational modification Phosphoserine. 73 to 77 (DTAGQ) contacts GTP. At Thr82 the chain carries Phosphothreonine; by LRRK2. Residues 131–134 (NKSD) and 163–164 (AK) contribute to the GTP site. Ser193 is modified (phosphoserine). Residues Cys210 and Cys212 are each lipidated (S-geranylgeranyl cysteine). Cys212 carries the post-translational modification Cysteine methyl ester.

The protein belongs to the small GTPase superfamily. Rab family. As to quaternary structure, interacts with GDI1, GDI2, CHM and CHML; phosphorylation at Thr-82 disrupts these interactions. In terms of tissue distribution, widely expressed in brain, testis, lung, heart, ovary, colon, kidney, uterus and spleen but not in liver.

It localises to the cytoplasmic vesicle. Its subcellular location is the phagosome. The protein resides in the phagosome membrane. It is found in the golgi apparatus. The protein localises to the trans-Golgi network membrane. It localises to the trans-Golgi network. Its function is as follows. The small GTPases Rab are key regulators of intracellular membrane trafficking, from the formation of transport vesicles to their fusion with membranes. Rabs cycle between an inactive GDP-bound form and an active GTP-bound form that is able to recruit to membranes different set of downstream effectors directly responsible for vesicle formation, movement, tethering and fusion. The low intrinsic GTPase activity of RAB43 is activated by USP6NL. Involved in retrograde transport from the endocytic pathway to the Golgi apparatus. Involved in the transport of Shiga toxin from early and recycling endosomes to the trans-Golgi network. Required for the structural integrity of the Golgi complex. Plays a role in the maturation of phagosomes that engulf pathogens, such as S.aureus and M.tuberculosis. In Homo sapiens (Human), this protein is Ras-related protein Rab-43 (RAB43).